Consider the following 468-residue polypeptide: 3-isopropylmalate dehydratase large subunit (468 aa).

3 residues coordinate [4Fe-4S] cluster: Cys-347, Cys-407, and Cys-410.

It belongs to the aconitase/IPM isomerase family. LeuC type 1 subfamily. As to quaternary structure, heterodimer of LeuC and LeuD. The cofactor is [4Fe-4S] cluster.

It carries out the reaction (2R,3S)-3-isopropylmalate = (2S)-2-isopropylmalate. The protein operates within amino-acid biosynthesis; L-leucine biosynthesis; L-leucine from 3-methyl-2-oxobutanoate: step 2/4. In terms of biological role, catalyzes the isomerization between 2-isopropylmalate and 3-isopropylmalate, via the formation of 2-isopropylmaleate. This Synechococcus elongatus (strain ATCC 33912 / PCC 7942 / FACHB-805) (Anacystis nidulans R2) protein is 3-isopropylmalate dehydratase large subunit.